Reading from the N-terminus, the 534-residue chain is 26S proteasome non-ATPase regulatory subunit 3 (534 aa).

Residues Met1–Lys16 show a composition bias toward basic and acidic residues. Residues Met1–Asp68 form a disordered region. Residues Pro17–Pro32 are compositionally biased toward pro residues. Lys38 is covalently cross-linked (Glycyl lysine isopeptide (Lys-Gly) (interchain with G-Cter in SUMO1); alternate). Lys38 is covalently cross-linked (Glycyl lysine isopeptide (Lys-Gly) (interchain with G-Cter in SUMO2); alternate). A compositionally biased stretch (low complexity) spans Gly49–Glu61. The 180-residue stretch at Ala286–Asp465 folds into the PCI domain. 2 positions are modified to phosphoserine: Ser418 and Ser430. The segment at Ser500 to Pro534 is disordered. A compositionally biased stretch (basic and acidic residues) spans Tyr501–Met525.

The protein belongs to the proteasome subunit S3 family. In terms of assembly, component of the 19S proteasome regulatory particle complex. The 26S proteasome consists of a 20S core particle (CP) and two 19S regulatory subunits (RP). The regulatory particle is made of a lid composed of 9 subunits including PSMD3, a base containing 6 ATPases and few additional components. Interacts with UBQLN1 (via ubiquitin-like domain). Interacts with ERCC6.

Functionally, component of the 26S proteasome, a multiprotein complex involved in the ATP-dependent degradation of ubiquitinated proteins. This complex plays a key role in the maintenance of protein homeostasis by removing misfolded or damaged proteins, which could impair cellular functions, and by removing proteins whose functions are no longer required. Therefore, the proteasome participates in numerous cellular processes, including cell cycle progression, apoptosis, or DNA damage repair. The sequence is that of 26S proteasome non-ATPase regulatory subunit 3 (PSMD3) from Bos taurus (Bovine).